The primary structure comprises 637 residues: DNA gyrase subunit B (637 aa).

In terms of domain architecture, Toprim spans 421 to 535; the sequence is SEIYIVEGDS…HGYVYIAQPP (115 aa). Residues glutamate 427, aspartate 500, and aspartate 502 each contribute to the Mg(2+) site.

The protein belongs to the type II topoisomerase GyrB family. In terms of assembly, heterotetramer, composed of two GyrA and two GyrB chains. In the heterotetramer, GyrA contains the active site tyrosine that forms a transient covalent intermediate with DNA, while GyrB binds cofactors and catalyzes ATP hydrolysis. Mg(2+) is required as a cofactor. The cofactor is Mn(2+). Ca(2+) serves as cofactor.

Its subcellular location is the cytoplasm. The enzyme catalyses ATP-dependent breakage, passage and rejoining of double-stranded DNA.. In terms of biological role, a type II topoisomerase that negatively supercoils closed circular double-stranded (ds) DNA in an ATP-dependent manner to modulate DNA topology and maintain chromosomes in an underwound state. Negative supercoiling favors strand separation, and DNA replication, transcription, recombination and repair, all of which involve strand separation. Also able to catalyze the interconversion of other topological isomers of dsDNA rings, including catenanes and knotted rings. Type II topoisomerases break and join 2 DNA strands simultaneously in an ATP-dependent manner. This chain is DNA gyrase subunit B, found in Halalkalibacterium halodurans (strain ATCC BAA-125 / DSM 18197 / FERM 7344 / JCM 9153 / C-125) (Bacillus halodurans).